The following is a 409-amino-acid chain: NADH-quinone oxidoreductase subunit D (409 aa).

The protein belongs to the complex I 49 kDa subunit family. As to quaternary structure, NDH-1 is composed of 14 different subunits. Subunits NuoB, C, D, E, F, and G constitute the peripheral sector of the complex.

The protein resides in the cell inner membrane. The catalysed reaction is a quinone + NADH + 5 H(+)(in) = a quinol + NAD(+) + 4 H(+)(out). Functionally, NDH-1 shuttles electrons from NADH, via FMN and iron-sulfur (Fe-S) centers, to quinones in the respiratory chain. The immediate electron acceptor for the enzyme in this species is believed to be ubiquinone. Couples the redox reaction to proton translocation (for every two electrons transferred, four hydrogen ions are translocated across the cytoplasmic membrane), and thus conserves the redox energy in a proton gradient. The sequence is that of NADH-quinone oxidoreductase subunit D from Campylobacter concisus (strain 13826).